Consider the following 348-residue polypeptide: Phospho-2-dehydro-3-deoxyheptonate aldolase, Trp-sensitive (348 aa).

This sequence belongs to the class-I DAHP synthase family.

It catalyses the reaction D-erythrose 4-phosphate + phosphoenolpyruvate + H2O = 7-phospho-2-dehydro-3-deoxy-D-arabino-heptonate + phosphate. Its pathway is metabolic intermediate biosynthesis; chorismate biosynthesis; chorismate from D-erythrose 4-phosphate and phosphoenolpyruvate: step 1/7. Its function is as follows. Stereospecific condensation of phosphoenolpyruvate (PEP) and D-erythrose-4-phosphate (E4P) giving rise to 3-deoxy-D-arabino-heptulosonate-7-phosphate (DAHP). The polypeptide is Phospho-2-dehydro-3-deoxyheptonate aldolase, Trp-sensitive (aroH) (Buchnera aphidicola subsp. Acyrthosiphon pisum (strain APS) (Acyrthosiphon pisum symbiotic bacterium)).